Here is a 430-residue protein sequence, read N- to C-terminus: Bifunctional protein GlmU (430 aa).

The tract at residues 1 to 227 (MISKTHTFVI…GEEATGINNR (227 aa)) is pyrophosphorylase. UDP-N-acetyl-alpha-D-glucosamine-binding positions include K25, Q74, 79–80 (GT), 104–106 (YGD), G140, E154, N168, and N225. D106 is a Mg(2+) binding site. Residue N225 coordinates Mg(2+). The segment at 228-248 (NDLIKAEFYFQENKRKIFTDS) is linker. The segment at 249 to 430 (GVTLVAPETV…REKQVTKRIK (182 aa)) is N-acetyltransferase. 2 residues coordinate UDP-N-acetyl-alpha-D-glucosamine: R314 and K332. The active-site Proton acceptor is H344. Y347 and N358 together coordinate UDP-N-acetyl-alpha-D-glucosamine. Acetyl-CoA contacts are provided by residues A361, 367 to 368 (NY), A404, and R421.

The protein in the N-terminal section; belongs to the N-acetylglucosamine-1-phosphate uridyltransferase family. This sequence in the C-terminal section; belongs to the transferase hexapeptide repeat family. Homotrimer. The cofactor is Mg(2+).

It localises to the cytoplasm. It carries out the reaction alpha-D-glucosamine 1-phosphate + acetyl-CoA = N-acetyl-alpha-D-glucosamine 1-phosphate + CoA + H(+). It catalyses the reaction N-acetyl-alpha-D-glucosamine 1-phosphate + UTP + H(+) = UDP-N-acetyl-alpha-D-glucosamine + diphosphate. Its pathway is nucleotide-sugar biosynthesis; UDP-N-acetyl-alpha-D-glucosamine biosynthesis; N-acetyl-alpha-D-glucosamine 1-phosphate from alpha-D-glucosamine 6-phosphate (route II): step 2/2. The protein operates within nucleotide-sugar biosynthesis; UDP-N-acetyl-alpha-D-glucosamine biosynthesis; UDP-N-acetyl-alpha-D-glucosamine from N-acetyl-alpha-D-glucosamine 1-phosphate: step 1/1. It participates in bacterial outer membrane biogenesis; LPS lipid A biosynthesis. Functionally, catalyzes the last two sequential reactions in the de novo biosynthetic pathway for UDP-N-acetylglucosamine (UDP-GlcNAc). The C-terminal domain catalyzes the transfer of acetyl group from acetyl coenzyme A to glucosamine-1-phosphate (GlcN-1-P) to produce N-acetylglucosamine-1-phosphate (GlcNAc-1-P), which is converted into UDP-GlcNAc by the transfer of uridine 5-monophosphate (from uridine 5-triphosphate), a reaction catalyzed by the N-terminal domain. This chain is Bifunctional protein GlmU, found in Wolbachia pipientis wMel.